The following is a 247-amino-acid chain: Caffeoyl-CoA O-methyltransferase (247 aa).

Residue lysine 21 participates in substrate binding. Residues threonine 63, glutamate 85, 87–88 (GV), serine 93, aspartate 111, and alanine 140 each bind S-adenosyl-L-methionine. Residue aspartate 163 coordinates substrate. Aspartate 163 is an a divalent metal cation binding site. Aspartate 165 contributes to the S-adenosyl-L-methionine binding site. Aspartate 189 and asparagine 190 together coordinate a divalent metal cation. Asparagine 194 contacts substrate.

The protein belongs to the class I-like SAM-binding methyltransferase superfamily. Cation-dependent O-methyltransferase family. CCoAMT subfamily. Homodimer. The cofactor is Ca(2+). It depends on Mg(2+) as a cofactor. Zn(2+) serves as cofactor.

The catalysed reaction is (E)-caffeoyl-CoA + S-adenosyl-L-methionine = (E)-feruloyl-CoA + S-adenosyl-L-homocysteine + H(+). The protein operates within aromatic compound metabolism; phenylpropanoid biosynthesis. Its function is as follows. Methylates caffeoyl-CoA to feruloyl-CoA and 5-hydroxyferuloyl-CoA to sinapoyl-CoA. Plays a role in the synthesis of feruloylated polysaccharides. Involved in the reinforcement of the plant cell wall. Also involved in the responding to wounding or pathogen challenge by the increased formation of cell wall-bound ferulic acid polymers. The polypeptide is Caffeoyl-CoA O-methyltransferase (CCOMT) (Medicago sativa (Alfalfa)).